A 366-amino-acid polypeptide reads, in one-letter code: UDP-N-acetylglucosamine--N-acetylmuramyl-(pentapeptide) pyrophosphoryl-undecaprenol N-acetylglucosamine transferase (366 aa).

Residues threonine 14–glycine 16, asparagine 125, arginine 168, serine 196, and glutamine 297 each bind UDP-N-acetyl-alpha-D-glucosamine.

Belongs to the glycosyltransferase 28 family. MurG subfamily.

Its subcellular location is the cell inner membrane. The enzyme catalyses di-trans,octa-cis-undecaprenyl diphospho-N-acetyl-alpha-D-muramoyl-L-alanyl-D-glutamyl-meso-2,6-diaminopimeloyl-D-alanyl-D-alanine + UDP-N-acetyl-alpha-D-glucosamine = di-trans,octa-cis-undecaprenyl diphospho-[N-acetyl-alpha-D-glucosaminyl-(1-&gt;4)]-N-acetyl-alpha-D-muramoyl-L-alanyl-D-glutamyl-meso-2,6-diaminopimeloyl-D-alanyl-D-alanine + UDP + H(+). The protein operates within cell wall biogenesis; peptidoglycan biosynthesis. Cell wall formation. Catalyzes the transfer of a GlcNAc subunit on undecaprenyl-pyrophosphoryl-MurNAc-pentapeptide (lipid intermediate I) to form undecaprenyl-pyrophosphoryl-MurNAc-(pentapeptide)GlcNAc (lipid intermediate II). This Rhodopseudomonas palustris (strain BisB5) protein is UDP-N-acetylglucosamine--N-acetylmuramyl-(pentapeptide) pyrophosphoryl-undecaprenol N-acetylglucosamine transferase.